Consider the following 182-residue polypeptide: Unknown protein 1 (182 aa).

The polypeptide is Unknown protein 1 (Helianthus annuus (Common sunflower)).